The sequence spans 367 residues: Glutamate 5-kinase (367 aa).

Lys-10 contributes to the ATP binding site. Positions 50, 137, and 149 each coordinate substrate. Residues 169–170 and 211–217 each bind ATP; these read TD and TGGMSTK. In terms of domain architecture, PUA spans 275–353; that stretch reads AGEITVDEGA…QQIDAILGYE (79 aa).

It belongs to the glutamate 5-kinase family.

It is found in the cytoplasm. It catalyses the reaction L-glutamate + ATP = L-glutamyl 5-phosphate + ADP. It participates in amino-acid biosynthesis; L-proline biosynthesis; L-glutamate 5-semialdehyde from L-glutamate: step 1/2. In terms of biological role, catalyzes the transfer of a phosphate group to glutamate to form L-glutamate 5-phosphate. This is Glutamate 5-kinase from Salmonella agona (strain SL483).